Here is a 395-residue protein sequence, read N- to C-terminus: Calsequestrin-1 (395 aa).

Positions 1–28 are cleaved as a signal peptide; sequence MNAADRMGARVALLLLLVLGSPQSGVHG. Tyr37 carries the phosphotyrosine modification. A Phosphoserine modification is found at Ser75. Thr118 is modified (phosphothreonine). Position 210 is a phosphoserine (Ser210). A glycan (N-linked (GlcNAc...) asparagine) is linked at Asn344. Residues 376–395 form a disordered region; it reads EGEINTEDDDDEDDDDDDDD.

This sequence belongs to the calsequestrin family. In terms of assembly, monomer; increases in response to a depletion of intracellular calcium. Homodimer. Homotetramer and homopolymer. Can form linear homooligomers. Ca(2+) ions promote oligomerization. Interacts (via C-terminal end and preferentially with the monomeric form) with STIM1; this interaction increases in response to a depletion of intracellular calcium, decreases both STIM1 aggregation and clustering, interaction of STIM1 with ORAI1 and store-operated Ca(2+) entry (SOCE) activity. Interacts with ASPH and TRDN. In terms of processing, N-glycosylated. Detected in skeletal muscle (at protein level). Detected in skeletal muscle.

It is found in the endoplasmic reticulum. The protein localises to the sarcoplasmic reticulum. The protein resides in the sarcoplasmic reticulum lumen. Its subcellular location is the mitochondrion matrix. It localises to the sarcoplasmic reticulum membrane. Functionally, calsequestrin is a high-capacity, moderate affinity, calcium-binding protein and thus acts as an internal calcium store in muscle. Calcium ions are bound by clusters of acidic residues at the protein surface, often at the interface between subunits. Can bind around 80 Ca(2+) ions. Regulates the release of lumenal Ca(2+) via the calcium release channel RYR1; this plays an important role in triggering muscle contraction. Negatively regulates store-operated Ca(2+) entry (SOCE) activity. The chain is Calsequestrin-1 (CASQ1) from Oryctolagus cuniculus (Rabbit).